Here is a 392-residue protein sequence, read N- to C-terminus: Integrin-linked kinase-associated serine/threonine phosphatase 2C (392 aa).

Met1 carries the N-acetylmethionine modification. The interval 1-91 (MDLFGDLPEP…PEEEKNGGEE (91 aa)) is disordered. The span at 56–70 (SGNSGSLATSGSQVV) shows a compositional bias: polar residues. The segment covering 72 to 91 (TEGKGAKRKAPEEEKNGGEE) has biased composition (basic and acidic residues). Residues 108–390 (KGYVAERKGE…DNVTVMVVRI (283 aa)) enclose the PPM-type phosphatase domain. 2 residues coordinate Mn(2+): Asp152 and Gly153. Residue Lys210 is modified to N6-acetyllysine. Residues Asp326 and Asp381 each contribute to the Mn(2+) site.

The protein belongs to the PP2C family. As to quaternary structure, interacts with ILK. Mg(2+) is required as a cofactor. Requires Mn(2+) as cofactor.

The protein localises to the cytoplasm. The enzyme catalyses O-phospho-L-seryl-[protein] + H2O = L-seryl-[protein] + phosphate. The catalysed reaction is O-phospho-L-threonyl-[protein] + H2O = L-threonyl-[protein] + phosphate. Its function is as follows. Protein phosphatase that may play a role in regulation of cell cycle progression via dephosphorylation of its substrates whose appropriate phosphorylation states might be crucial for cell proliferation. Selectively associates with integrin linked kinase (ILK), to modulate cell adhesion and growth factor signaling. Inhibits the ILK-GSK3B signaling axis and may play an important role in inhibiting oncogenic transformation. This Mus musculus (Mouse) protein is Integrin-linked kinase-associated serine/threonine phosphatase 2C (Ilkap).